The sequence spans 251 residues: uncharacterized protein (251 aa).

The segment at 207 to 251 (ATPHSKRGRTKLYRKEPPGDNRSPPPWQEPHGEGLAEKLSPGPAR) is disordered.

This is an uncharacterized protein from Treponema pallidum (strain Nichols).